Consider the following 128-residue polypeptide: Large ribosomal subunit protein bL17 (128 aa).

Belongs to the bacterial ribosomal protein bL17 family. Part of the 50S ribosomal subunit. Contacts protein L32.

This Proteus mirabilis (strain HI4320) protein is Large ribosomal subunit protein bL17.